The sequence spans 204 residues: MSIFEYNGSAVVAMVGKNCFAIASDRRLGVQLQTIATDFQRISKIHDRVFIGLSGLATDVQTLYQRLVFRHKLYQLREERDMKPETFASLVSAILYEKRFGPYLCQPVIAGLGDDDKPFICTMDSIGAKELAKDFVVSGTASESLYGACEAMYKPDMEAEELFETISQALLSSVDRDCLSGWGGHVYIVTPTEIKERILKGRMD.

It belongs to the peptidase T1B family. Component of the 20S core complex of the 26S proteasome. The 26S proteasome is composed of a core protease (CP), known as the 20S proteasome, capped at one or both ends by the 19S regulatory particle (RP/PA700). The 20S proteasome core is composed of 28 subunits that are arranged in four stacked rings, resulting in a barrel-shaped structure. The two end rings are each formed by seven alpha subunits, and the two central rings are each formed by seven beta subunits. The catalytic chamber with the active sites is on the inside of the barrel.

Its subcellular location is the cytoplasm. It is found in the nucleus. In terms of biological role, non-catalytic component of the proteasome, a multicatalytic proteinase complex which is characterized by its ability to cleave peptides with Arg, Phe, Tyr, Leu, and Glu adjacent to the leaving group at neutral or slightly basic pH. The proteasome has an ATP-dependent proteolytic activity. In Arabidopsis thaliana (Mouse-ear cress), this protein is Proteasome subunit beta type-3-A (PBC1).